We begin with the raw amino-acid sequence, 62 residues long: Small ribosomal subunit protein eS27 (62 aa).

Zn(2+) contacts are provided by cysteine 17, cysteine 20, cysteine 36, and cysteine 39. The C4-type zinc finger occupies 17 to 39 (CPDCENEQIIFEKASTVVDCVVC).

Belongs to the eukaryotic ribosomal protein eS27 family. Part of the 30S ribosomal subunit. It depends on Zn(2+) as a cofactor.

This is Small ribosomal subunit protein eS27 from Methanosphaerula palustris (strain ATCC BAA-1556 / DSM 19958 / E1-9c).